We begin with the raw amino-acid sequence, 345 residues long: Probable G-protein coupled receptor 139 (345 aa).

Residues 1 to 21 (MEHTHAHLAANSSACGLGFVP) are Extracellular-facing. An N-linked (GlcNAc...) asparagine glycan is attached at N11. The helical transmembrane segment at 22-42 (VVYYSFLLCLGLPANILTVII) threads the bilayer. The Cytoplasmic portion of the chain corresponds to 43-57 (LSQLVARRQKSSYNY). The chain crosses the membrane as a helical span at residues 58 to 78 (LLALAAADILVLFFIVFVDFL). Residues 79–94 (LEDFILTMQMPLIPDK) lie on the Extracellular side of the membrane. The chain crosses the membrane as a helical span at residues 95 to 115 (IIEVLEFSSIHTSIWITVPLT). Over 116–140 (VDRYIAVCHPLKYHTVSYPARTRKV) the chain is Cytoplasmic. The helical transmembrane segment at 141-161 (ILSVYITCFLTSIPYYWWPNI) threads the bilayer. At 162 to 173 (WTEDYISTSMHH) the chain is on the extracellular side. Residues 174-194 (VLVWIHCFTVYLVPCSIFFIL) form a helical membrane-spanning segment. Residues 195-220 (NSIIVYKLRRKSNFRLRGYSTGKTTA) are Cytoplasmic-facing. The helical transmembrane segment at 221-241 (ILFTITSIFATLWAPRIIMIL) threads the bilayer. At 242-260 (YHLYGAPIQNPWLVHIMLD) the chain is on the extracellular side. The helical transmembrane segment at 261–281 (VANMLALLNTAINFFLYCFIS) threads the bilayer. Residues 282-345 (KRFRTMAAAT…KHGKPIKVSP (64 aa)) are Cytoplasmic-facing.

The protein belongs to the G-protein coupled receptor 1 family. In terms of tissue distribution, expressed almost exclusively in the brain. Abundantly expressed in the ventrolateral region of caudate putamen, the habenular nucleus, the zona incerta, and the medial mammillary nucleus.

The protein resides in the cell membrane. In terms of biological role, orphan receptor. Seems to act through a G(q/11)-mediated pathway. This Mus musculus (Mouse) protein is Probable G-protein coupled receptor 139 (Gpr139).